A 66-amino-acid polypeptide reads, in one-letter code: Large ribosomal subunit protein uL29 (66 aa).

It belongs to the universal ribosomal protein uL29 family.

This chain is Large ribosomal subunit protein uL29, found in Hydrogenobaculum sp. (strain Y04AAS1).